We begin with the raw amino-acid sequence, 177 residues long: MRVGMGYDVHKLVEGRDLILGGVKVPHTLGLLGHSDADVLLHAIMDALLGAAALGDIGKHFPDTDPAYEGISSLKLLEHVRDLIAKKGYVIENIDATVIAQKPKLRPYIEQMEQNVADTLQIAKEQVNIKATTEEWLGFTGREEGIASQAICSLTGLYEASMQVGGGCSGCGGCQAD.

The a divalent metal cation site is built by Asp-8 and His-10. Residues 8–10 (DVH) and 34–35 (HS) contribute to the 4-CDP-2-C-methyl-D-erythritol 2-phosphate site. Position 42 (His-42) interacts with a divalent metal cation. Residues 56–58 (DIG), 61–65 (FPDTD), 132–135 (TTEE), Phe-139, and Arg-142 contribute to the 4-CDP-2-C-methyl-D-erythritol 2-phosphate site.

The protein belongs to the IspF family. Homotrimer. A divalent metal cation serves as cofactor.

It carries out the reaction 4-CDP-2-C-methyl-D-erythritol 2-phosphate = 2-C-methyl-D-erythritol 2,4-cyclic diphosphate + CMP. It functions in the pathway isoprenoid biosynthesis; isopentenyl diphosphate biosynthesis via DXP pathway; isopentenyl diphosphate from 1-deoxy-D-xylulose 5-phosphate: step 4/6. In terms of biological role, involved in the biosynthesis of isopentenyl diphosphate (IPP) and dimethylallyl diphosphate (DMAPP), two major building blocks of isoprenoid compounds. Catalyzes the conversion of 4-diphosphocytidyl-2-C-methyl-D-erythritol 2-phosphate (CDP-ME2P) to 2-C-methyl-D-erythritol 2,4-cyclodiphosphate (ME-CPP) with a corresponding release of cytidine 5-monophosphate (CMP). This is 2-C-methyl-D-erythritol 2,4-cyclodiphosphate synthase from Agathobacter rectalis (strain ATCC 33656 / DSM 3377 / JCM 17463 / KCTC 5835 / VPI 0990) (Eubacterium rectale).